A 54-amino-acid chain; its full sequence is Large ribosomal subunit protein bL32c (54 aa).

Over residues 1–25 (MAVPKKRTSKAKKNSRKANWKRKAA) the composition is skewed to basic residues. A disordered region spans residues 1–26 (MAVPKKRTSKAKKNSRKANWKRKAAK).

This sequence belongs to the bacterial ribosomal protein bL32 family.

The protein resides in the plastid. It is found in the chloroplast. This is Large ribosomal subunit protein bL32c from Thalassiosira pseudonana (Marine diatom).